Consider the following 289-residue polypeptide: Tachykinins (289 aa).

Residues Met-1–Ala-24 form the signal peptide. Residues Ala-25 to Val-49 constitute a propeptide that is removed on maturation. The tract at residues Glu-28 to Pro-80 is disordered. Arg-61 is subject to Arginine amide. Residues Gly-62–Ala-72 show a composition bias toward basic and acidic residues. Asn-95 carries the post-translational modification Asparagine amide. Arg-110 is subject to Arginine amide. Val-155 is subject to Valine amide. Residues Gly-156–Asp-175 are disordered. Arginine amide is present on residues Arg-167, Arg-198, Arg-237, and Arg-281. Positions Pro-285 to Glu-289 are excised as a propeptide.

Belongs to the tachykinin family.

It is found in the secreted. Functionally, tachykinins are active peptides which excite neurons, evoke behavioral responses, are potent vasodilators and secretagogues, and contract (directly or indirectly) many smooth muscles. Stimulates gut muscle contractions. The chain is Tachykinins from Drosophila pseudoobscura pseudoobscura (Fruit fly).